A 248-amino-acid polypeptide reads, in one-letter code: Ubiquinone biosynthesis O-methyltransferase (248 aa).

S-adenosyl-L-methionine contacts are provided by arginine 41, glycine 72, aspartate 93, and methionine 136.

It belongs to the methyltransferase superfamily. UbiG/COQ3 family.

The enzyme catalyses a 3-demethylubiquinol + S-adenosyl-L-methionine = a ubiquinol + S-adenosyl-L-homocysteine + H(+). The catalysed reaction is a 3-(all-trans-polyprenyl)benzene-1,2-diol + S-adenosyl-L-methionine = a 2-methoxy-6-(all-trans-polyprenyl)phenol + S-adenosyl-L-homocysteine + H(+). Its pathway is cofactor biosynthesis; ubiquinone biosynthesis. Functionally, O-methyltransferase that catalyzes the 2 O-methylation steps in the ubiquinone biosynthetic pathway. The polypeptide is Ubiquinone biosynthesis O-methyltransferase (Rhizobium rhizogenes (strain K84 / ATCC BAA-868) (Agrobacterium radiobacter)).